A 322-amino-acid chain; its full sequence is Nodulation protein Z (322 aa).

The GT23 domain occupies 1–314 (MYNRYVLSRR…NDPSRLVVIE (314 aa)).

It belongs to the glycosyltransferase 23 family.

In terms of biological role, fucosyltransferase which adds the fucose moiety of the nod factor on its terminal reducing N-acetylglucosamine end. Uses GDP-fucose as the donor group. The chain is Nodulation protein Z (nodZ) from Sinorhizobium fredii (strain NBRC 101917 / NGR234).